Consider the following 20-residue polypeptide: Tetracycline resistance leader peptide (20 aa).

In Bacillus cereus, this protein is Tetracycline resistance leader peptide (tetL).